The sequence spans 461 residues: ATP synthase subunit beta (461 aa).

151–158 (GGAGVGKT) is a binding site for ATP.

It belongs to the ATPase alpha/beta chains family. In terms of assembly, F-type ATPases have 2 components, CF(1) - the catalytic core - and CF(0) - the membrane proton channel. CF(1) has five subunits: alpha(3), beta(3), gamma(1), delta(1), epsilon(1). CF(0) has three main subunits: a(1), b(2) and c(9-12). The alpha and beta chains form an alternating ring which encloses part of the gamma chain. CF(1) is attached to CF(0) by a central stalk formed by the gamma and epsilon chains, while a peripheral stalk is formed by the delta and b chains.

The protein localises to the cell inner membrane. It catalyses the reaction ATP + H2O + 4 H(+)(in) = ADP + phosphate + 5 H(+)(out). Its function is as follows. Produces ATP from ADP in the presence of a proton gradient across the membrane. The catalytic sites are hosted primarily by the beta subunits. The chain is ATP synthase subunit beta from Colwellia psychrerythraea (strain 34H / ATCC BAA-681) (Vibrio psychroerythus).